Here is a 242-residue protein sequence, read N- to C-terminus: MINIGIHGSNGRMGTQIRLCLEDDEQAKASAFFDQGSNYEDFFNKCDVIIDFSTPKGCEDLLLYARSNPKPLVIGTTGLDTKQNELMQSASITMPILYATNMSLGVAILKKLSYLASEALRDFDIEILEMHHNKKKDAPSGTAMTLAQNVAKARNLDLEKVRVSGRDGIIGQRSKDEIAVMSLRGGDIVGSHRVGFYNEGEFIELNHSATSRATFAKGAIKCAKWLVSQENGLYDIDDCLGI.

NAD(+)-binding positions include 8 to 13 (GSNGRM), 75 to 77 (GTT), and 99 to 102 (ATNM). His131 (proton donor/acceptor) is an active-site residue. (S)-2,3,4,5-tetrahydrodipicolinate is bound at residue His132. Lys135 acts as the Proton donor in catalysis. 141–142 (GT) provides a ligand contact to (S)-2,3,4,5-tetrahydrodipicolinate.

The protein belongs to the DapB family.

The protein resides in the cytoplasm. It carries out the reaction (S)-2,3,4,5-tetrahydrodipicolinate + NAD(+) + H2O = (2S,4S)-4-hydroxy-2,3,4,5-tetrahydrodipicolinate + NADH + H(+). It catalyses the reaction (S)-2,3,4,5-tetrahydrodipicolinate + NADP(+) + H2O = (2S,4S)-4-hydroxy-2,3,4,5-tetrahydrodipicolinate + NADPH + H(+). It functions in the pathway amino-acid biosynthesis; L-lysine biosynthesis via DAP pathway; (S)-tetrahydrodipicolinate from L-aspartate: step 4/4. Catalyzes the conversion of 4-hydroxy-tetrahydrodipicolinate (HTPA) to tetrahydrodipicolinate. This Campylobacter lari (strain RM2100 / D67 / ATCC BAA-1060) protein is 4-hydroxy-tetrahydrodipicolinate reductase.